We begin with the raw amino-acid sequence, 214 residues long: Rhodanese-like domain-containing protein 10 (214 aa).

Residues 58–182 enclose the Rhodanese domain; sequence ASEGYILLDV…VSEGDFPEIE (125 aa). Cysteine 142 (cysteine persulfide intermediate) is an active-site residue. A helical membrane pass occupies residues 190 to 206; the sequence is ATIGGVSFYLLKLLVLL.

It localises to the membrane. This is Rhodanese-like domain-containing protein 10 (STR10) from Arabidopsis thaliana (Mouse-ear cress).